We begin with the raw amino-acid sequence, 268 residues long: Ribosomal RNA small subunit methyltransferase A (268 aa).

S-adenosyl-L-methionine is bound by residues Asn16, Leu18, Gly43, Glu64, Asp89, and Asn110.

This sequence belongs to the class I-like SAM-binding methyltransferase superfamily. rRNA adenine N(6)-methyltransferase family. RsmA subfamily.

It localises to the cytoplasm. The catalysed reaction is adenosine(1518)/adenosine(1519) in 16S rRNA + 4 S-adenosyl-L-methionine = N(6)-dimethyladenosine(1518)/N(6)-dimethyladenosine(1519) in 16S rRNA + 4 S-adenosyl-L-homocysteine + 4 H(+). Specifically dimethylates two adjacent adenosines (A1518 and A1519) in the loop of a conserved hairpin near the 3'-end of 16S rRNA in the 30S particle. May play a critical role in biogenesis of 30S subunits. The chain is Ribosomal RNA small subunit methyltransferase A from Pseudomonas aeruginosa (strain ATCC 15692 / DSM 22644 / CIP 104116 / JCM 14847 / LMG 12228 / 1C / PRS 101 / PAO1).